A 256-amino-acid polypeptide reads, in one-letter code: Ribonuclease T2 (256 aa).

The signal sequence occupies residues 1 to 24; that stretch reads MRPAALRGALLGCLCLALLCLGGA. An intrachain disulfide couples C48 to C55. The active site involves H65. 3 disulfides stabilise this stretch: C75-C121, C184-C241, and C202-C213. N-linked (GlcNAc...) asparagine glycans are attached at residues N76 and N106. Catalysis depends on residues E114 and H118. N212 carries an N-linked (GlcNAc...) asparagine glycan.

This sequence belongs to the RNase T2 family. Ubiquitous. Higher expression levels observed in the temporal lobe and fetal brain.

It localises to the secreted. Its subcellular location is the lysosome lumen. The protein resides in the endoplasmic reticulum lumen. The protein localises to the mitochondrion intermembrane space. The catalysed reaction is a ribonucleotidyl-ribonucleotide-RNA + H2O = a 3'-end 3'-phospho-ribonucleotide-RNA + a 5'-end dephospho-ribonucleoside-RNA + H(+). It catalyses the reaction an adenylyl-uridine-RNA = a 3'-end 2',3'-cyclophospho-AMP-RNA + a 5'-end dephospho-uridine-RNA. The enzyme catalyses a guanylyl-uridine-RNA = a 3'-end 2',3'-cyclophospho-GMP-RNA + a 5'-end dephospho-uridine-RNA. Inhibited by Zn(2+) and Cu(2+). In terms of biological role, ribonuclease that plays an essential role in innate immune response by recognizing and degrading RNAs from microbial pathogens that are subsequently sensed by TLR8. Cleaves preferentially single-stranded RNA molecules between purine and uridine residues, which critically contributes to the supply of catabolic uridine and the generation of purine-2',3'-cyclophosphate-terminated oligoribonucleotides. In turn, RNase T2 degradation products promote the RNA-dependent activation of TLR8. In plasmacytoid dendritic cells, it cooperates with PLD3 or PLD4 5'-&gt;3' exonucleases to process RNA fragments and release 2',3'-cyclic guanosine monophosphate (2',3'-cGMP), a potent stimulatory ligand for TLR7. Also plays a key role in degradation of mitochondrial RNA and processing of non-coding RNA imported from the cytosol into mitochondria. Participates as well in degradation of mitochondrion-associated cytosolic rRNAs. The sequence is that of Ribonuclease T2 (RNASET2) from Homo sapiens (Human).